The following is a 617-amino-acid chain: COMPASS component cclA (617 aa).

Composition is skewed to low complexity over residues 1–19 (MASIQPAGSSAPSSNINSP) and 40–50 (SSPAPASNASA). The segment at 1–89 (MASIQPAGSS…AKKRATAVQN (89 aa)) is disordered. Residues 57 to 69 (SKRNKRDSRKKRE) show a composition bias toward basic residues. In terms of domain architecture, B30.2/SPRY spans 157-380 (IADTSFPHIK…YAFNLKETPT (224 aa)). A disordered region spans residues 595 to 617 (TPNTEEPAARPENITVGHDVEMS).

Belongs to the cclA family. As to quaternary structure, component of the COMPASS complex.

The protein resides in the nucleus. It localises to the chromosome. Its subcellular location is the telomere. Its function is as follows. Component of the COMPASS (Set1C) complex that specifically mono-, di- and trimethylates histone H3 to form H3K4me1/2/3, which subsequently plays a role in telomere length maintenance and transcription elongation regulation. Controls the production of several secondary metabolites, including astellolides. This is COMPASS component cclA from Aspergillus oryzae (strain ATCC 42149 / RIB 40) (Yellow koji mold).